The sequence spans 411 residues: Imidazolonepropionase (411 aa).

Fe(3+) is bound by residues His-75 and His-77. Residues His-75 and His-77 each coordinate Zn(2+). The 4-imidazolone-5-propanoate site is built by Arg-84, Tyr-147, and His-180. Position 147 (Tyr-147) interacts with N-formimidoyl-L-glutamate. His-245 provides a ligand contact to Fe(3+). His-245 contributes to the Zn(2+) binding site. A 4-imidazolone-5-propanoate-binding site is contributed by Gln-248. Fe(3+) is bound at residue Asp-320. Asp-320 lines the Zn(2+) pocket. N-formimidoyl-L-glutamate is bound by residues Asn-322 and Gly-324. Thr-325 contributes to the 4-imidazolone-5-propanoate binding site.

The protein belongs to the metallo-dependent hydrolases superfamily. HutI family. It depends on Zn(2+) as a cofactor. Requires Fe(3+) as cofactor.

Its subcellular location is the cytoplasm. The enzyme catalyses 4-imidazolone-5-propanoate + H2O = N-formimidoyl-L-glutamate. Its pathway is amino-acid degradation; L-histidine degradation into L-glutamate; N-formimidoyl-L-glutamate from L-histidine: step 3/3. Its function is as follows. Catalyzes the hydrolytic cleavage of the carbon-nitrogen bond in imidazolone-5-propanoate to yield N-formimidoyl-L-glutamate. It is the third step in the universal histidine degradation pathway. In Aeromonas hydrophila subsp. hydrophila (strain ATCC 7966 / DSM 30187 / BCRC 13018 / CCUG 14551 / JCM 1027 / KCTC 2358 / NCIMB 9240 / NCTC 8049), this protein is Imidazolonepropionase.